The sequence spans 505 residues: Deoxyguanosinetriphosphate triphosphohydrolase (505 aa).

The HD domain occupies 66–273 (RLTHSMEVQQ…MEAADDISYC (208 aa)).

The protein belongs to the dGTPase family. Type 1 subfamily. Homotetramer. It depends on Mg(2+) as a cofactor.

The enzyme catalyses dGTP + H2O = 2'-deoxyguanosine + triphosphate + H(+). In terms of biological role, dGTPase preferentially hydrolyzes dGTP over the other canonical NTPs. This Salmonella schwarzengrund (strain CVM19633) protein is Deoxyguanosinetriphosphate triphosphohydrolase.